We begin with the raw amino-acid sequence, 304 residues long: Beta-lactamase-like protein str6 (304 aa).

The protein belongs to the beta-lactamase family.

It participates in mycotoxin biosynthesis. Functionally, beta-lactamase-like protein; part of the gene cluster that mediates the biosynthesis of strobilurin A, an antifungal polyketide that contains a key beta-methoxyacrylate toxophore that targets the complex III of the mitochondrial electron transport chain. Strobilurin biosynthesis begins with construction of benzoyl CoA by step-wise elimination of ammonia from phenylalanine by the phenylalanine ammonia-lyase str11, oxygenation by str8 and retro-Claisen reaction to form benzoic acid, which is activated to its CoA thiolester benzoyl CoA by the dedicated CoA ligase str10. Benzoyl CoA forms the starter unit for the highly reducing polyketide synthase stpks1 that produces the polyketide prestrobilutin A. The FAD-dependent oxygenase str9 then catalyzes the key oxidative rearrangement responsible for the creation of the beta-methoxyacrylate toxophore. Str9 performs epoxidation of the 2,3 olefin of prestrobilutin A, followed by Meinwald rearrangement to furnish the aldehyde intermediate. Rapid enolization of the aldehyde intermediate would give the beta-methoxyacrylate skeleton and methylations catalyzed by str2 and str3 complete the synthesis and lead to the production of strobilurin A. The short-chain dehydrogenase stl2 and the dehydrogenase str4 play a role in the shunt pathway leading to the production of bolineol. The cluster encodes no obvious halogenase gene that could be involved in production of strobilurin B, nor any obvious dimethylallyl-transferase that could be involved in the production of strobilurin G. It is possible that unknown proteins encoded in, or near, the cluster (such as str1 or stl1) may form new classes of halogenases or dimethylally-transferases, or that the responsible genes are located elsewhere on the genome. Similarly, proteins encoded by str5/str6 hydrolases appear to have no chemical role in the biosynthesis of strobilurin A. Finally, no obvious self-resistance gene is found within the cluster. In Strobilurus tenacellus, this protein is Beta-lactamase-like protein str6.